A 997-amino-acid polypeptide reads, in one-letter code: Burkholderia TALE-like protein 2 (997 aa).

Residues 19–50 (LSPLERIKIEKHYGGGATLAFISNQHDELAQV) form a Cryptic repeat -1 repeat. Residues 51-83 (LSRADILKIASYDCAAQALQAVLDCGPMLGKRG) form a Cryptic repeat 0 repeat. 27 Core repeat repeats span residues 84–116 (FSRA…GKRG), 117–147 (FSQV…GERG), 148–180 (FSRG…RERG), 181–213 (FNQA…GKRG), 214–244 (FSRV…RKRG), 245–277 (FHPT…RERG), 278–310 (FSQA…CERG), 311–343 (FSQP…RERG), 344–376 (FSQA…HERG), 377–409 (FSQA…RERG), 410–442 (FSQP…RERG), 443–475 (VRQA…RERG), 476–508 (FNQA…DKRG), 509–539 (FSRV…RKRG), 540–572 (FNPT…RERG), 573–605 (FNQA…RERG), 606–638 (FSQP…HKRG), 639–671 (FNPT…RERG), 672–704 (FGQP…RERG), 705–737 (FSQP…RERG), 738–770 (FSQS…RESD), 771–803 (FRQA…RQRG), 804–836 (FNRA…DERG), 837–869 (FNLT…QQRG), 870–902 (FNLT…RQRG), 903–935 (FNLI…RQRD), and 936–967 (LSLI…MQAG). The tract at residues 84–967 (FSRADIVRIA…KYGPVLMQAG (884 aa)) is buD domain. 4 ANK repeats span residues 772-801 (RQAD…RLRQ), 805-834 (NRAS…TLDE), 838-867 (NLTN…TLQQ), and 871-900 (NLTD…TLRQ). The Cryptic repeat +1 repeat unit spans residues 968-997 (RSNEEIVHVAARRGGAGRIRKMVALLLERQ).

This sequence belongs to the transcription activator-like effector (TALE) family. Bat subfamily.

In terms of biological role, binds to DNA in a sequence-specific manner. The polypeptide is Burkholderia TALE-like protein 2 (Mycetohabitans rhizoxinica (strain DSM 19002 / CIP 109453 / HKI 454) (Paraburkholderia rhizoxinica)).